Here is an 886-residue protein sequence, read N- to C-terminus: General transcription factor 3C polypeptide 3 (886 aa).

The interval 1 to 121 is disordered; it reads MSGFSPELID…TPEQPTAGDV (121 aa). Position 2 is an N-acetylserine (Ser2). Residues 12 to 44 are compositionally biased toward basic and acidic residues; that stretch reads LEGKISFEEFERRREERKTREKKSLQEKGKLSA. The residue at position 43 (Ser43) is a Phosphoserine. A compositionally biased stretch (polar residues) spans 53–63; sequence VPSSSGINSTK. Acidic residues predominate over residues 92-113; it reads ENEDDEEEEEEEEEEEEEEETP. TPR repeat units lie at residues 149–182, 183–216, 217–250, 252–284, 290–323, 326–361, 421–454, 456–489, 491–523, 733–766, and 811–844; these read LRGLMGEANIRFARGEREEAILMCMEIIRQAPLA, YEPFSTLAMIYEDQGDMEKSLQFELIAAHLNPSD, TEEWVRLAEMSLEQDNIKQAIFCYTKALKYEPTN, RYLWERSSLYEQMGDHKMAMDGYRRILNLLSPS, MQLARDMAKSYYEANDVTSAINIIDEAFSKHQGL, MEDVNIAAELYISNKQYDKALEIITDFSGIVLEKKT, GDLYLDVAEAFLDVGEYNSALPLLSALVCSERYN, AVVWLRHAECLKALGYMERAAESYGKVVDLAPLH, DARISLSTLQQQLGQPEKALEALEPMYDPDTLA, HALCVLNGHNAFVSGSFKHALGQYVQAFRTHPDE, and QESFYNLGRGLHQLGLIHLAIHYYQKALELPPLV. A Phosphoserine modification is found at Ser282.

In terms of assembly, part of the TFIIIC subcomplex TFIIIC2, consisting of six subunits, GTF3C1, GTF3C2, GTF3C3, GTF3C4, GTF3C5 and GTF3C6. Interacts with BRF1 and TBP.

It is found in the nucleus. In terms of biological role, involved in RNA polymerase III-mediated transcription. Integral, tightly associated component of the DNA-binding TFIIIC2 subcomplex that directly binds tRNA and virus-associated RNA promoters. The polypeptide is General transcription factor 3C polypeptide 3 (GTF3C3) (Homo sapiens (Human)).